A 2095-amino-acid chain; its full sequence is Oxygen-regulated protein 1 (2095 aa).

2 Doublecortin domains span residues 35–117 (KRIS…VDLD) and 157–236 (RRLV…GNYD). 5 disordered regions span residues 358 to 379 (GLSN…DYGP), 643 to 688 (ENRK…GKIP), 863 to 887 (GAEV…PDFP), 1400 to 1430 (NKKK…SSER), and 1572 to 1595 (SGYP…EPTR). Residues 1405–1419 (ISSDKEESRTSEEPR) show a composition bias toward basic and acidic residues. Positions 1420 to 1430 (SITNSMTSSER) are enriched in polar residues. A compositionally biased stretch (basic and acidic residues) spans 1583–1595 (HNDDSGQEKEPTR).

Interacts (via the doublecortin domains) with microtubules. Interacts with RP1L1. Interacts with MAK. As to expression, expressed in the cell bodies and inner segments of photoreceptors. Not found in liver, spleen, kidney, brain, thymus, muscle, heart, lung and testis.

It is found in the cytoplasm. The protein resides in the cytoskeleton. It localises to the cilium axoneme. The protein localises to the cell projection. Its subcellular location is the cilium. It is found in the photoreceptor outer segment. Microtubule-associated protein regulating the stability and length of the microtubule-based axoneme of photoreceptors. Required for the differentiation of photoreceptor cells, it plays a role in the organization of the outer segment of rod and cone photoreceptors ensuring the correct orientation and higher-order stacking of outer segment disks along the photoreceptor axoneme. This chain is Oxygen-regulated protein 1 (Rp1), found in Mus musculus (Mouse).